A 675-amino-acid polypeptide reads, in one-letter code: Collagen alpha-3(IX) chain (675 aa).

Positions 1–21 are cleaved as a signal peptide; it reads MTVFPTLGLLFLCQLLATTSA. Disordered stretches follow at residues 22 to 517 and 542 to 660; these read QRVG…KEAS and KPLS…ICDT. The interval 25-515 is triple-helical region 3 (COL3); the sequence is GPQGPPGPRG…TGKPGPPGKE (491 aa). Composition is skewed to pro residues over residues 27 to 38 and 51 to 60; these read QGPPGPRGPPGP and SGLPGPPGPK. The segment covering 62–87 has biased composition (low complexity); that stretch reads APGKPGAAGEAGLPGLPGVDGLTGTD. The segment covering 105 to 125 has biased composition (pro residues); that stretch reads AGPPGPAGKGLPGPPGPPGPS. Residues 126-135 are compositionally biased toward gly residues; it reads GLPGGNGFRG. Composition is skewed to pro residues over residues 136 to 155 and 173 to 184; these read PPGPSGLPGFPGPPGPPGPP and LCPPGPPGPPGM. Low complexity predominate over residues 218-233; it reads PGSVGLQGPRGLRGLP. The Cell attachment site signature appears at 242–244; it reads RGD. The span at 301 to 317 shows a compositional bias: basic and acidic residues; sequence KDGRDGAPGLDGEKGDA. Over residues 361–374 the composition is skewed to low complexity; sequence EPGIPGDVGIPGDR. Asn-479 carries an N-linked (GlcNAc...) asparagine glycan. Low complexity predominate over residues 481–508; sequence TAGAPGIPGHPGPMGHQGEQGVPGITGK. Positions 516–546 are nonhelical region 3 (NC3); sequence ASEQHIRELCGEMINDQIAQLAANLRKPLSP. Residues 547-626 form a triple-helical region 2 (COL2) region; the sequence is GMTGRPGPAG…QGLPGVPGIS (80 aa). Positions 569–582 are enriched in low complexity; sequence HPGARGPPGYRGPT. The Cell attachment site motif lies at 591–593; that stretch reads RGD. The span at 613–624 shows a compositional bias: low complexity; that stretch reads DQGPQGLPGVPG. Residues 627 to 631 form a nonhelical region 2 (NC2) region; that stretch reads KNGRD. Positions 632 to 658 are triple-helical region 1 (COL1); sequence GAQGEPGLPGDPGTPGAVGAQGTPGIC. The tract at residues 659-675 is nonhelical region 1 (NC1); that stretch reads DTSACMGAVGASTSKKS.

It belongs to the fibril-associated collagens with interrupted helices (FACIT) family. Trimers composed of three different chains: alpha 1(IX), alpha 2(IX), and alpha 3(IX). Post-translationally, prolines at the third position of the tripeptide repeating unit (G-X-Y) are hydroxylated in some or all of the chains.

Its subcellular location is the secreted. The protein resides in the extracellular space. It localises to the extracellular matrix. In terms of biological role, collagen type IX is a minor cartilage non-fibrillar collagen. It is associated with type II collagen fibrils. The chain is Collagen alpha-3(IX) chain (COL9A3) from Gallus gallus (Chicken).